The sequence spans 366 residues: Putative [LysW]-aminoadipate semialdehyde/glutamate semialdehyde transaminase (366 aa).

Pyridoxal 5'-phosphate is bound by residues 90 to 91 (GT) and Phe117. Arg120 lines the substrate pocket. 202-205 (DEVQ) contacts pyridoxal 5'-phosphate. N6-(pyridoxal phosphate)lysine is present on Lys230. Ser254 serves as a coordination point for substrate. Thr255 is a binding site for pyridoxal 5'-phosphate.

Belongs to the class-III pyridoxal-phosphate-dependent aminotransferase family. LysJ subfamily. In terms of assembly, homodimer. Requires pyridoxal 5'-phosphate as cofactor.

The protein localises to the cytoplasm. The enzyme catalyses [amino-group carrier protein]-C-terminal-gamma-(L-lysyl)-L-glutamate + 2-oxoglutarate = [amino-group carrier protein]-C-terminal-N-(1-carboxy-5-oxopentan-1-yl)-L-glutamine + L-glutamate. The catalysed reaction is [amino-group carrier protein]-C-terminal-gamma-(L-ornithyl)-L-glutamate + 2-oxoglutarate = [amino-group carrier protein]-C-terminal-gamma-(L-glutamyl-5-semialdehyde)-L-glutamate + L-glutamate. The protein operates within amino-acid biosynthesis; L-lysine biosynthesis via AAA pathway; L-lysine from L-alpha-aminoadipate (Thermus route): step 4/5. It functions in the pathway amino-acid biosynthesis; L-arginine biosynthesis. Involved in both the arginine and lysine biosynthetic pathways. The protein is Putative [LysW]-aminoadipate semialdehyde/glutamate semialdehyde transaminase of Pyrococcus furiosus (strain ATCC 43587 / DSM 3638 / JCM 8422 / Vc1).